The primary structure comprises 490 residues: Cyclin-A2-1 (490 aa).

Residues 34–76 (FAPSVSLPARTERKQTAKGKTKRGALDEITSASTATSAPQPKR) form a disordered region. Polar residues predominate over residues 63 to 72 (TSASTATSAP).

Belongs to the cyclin family. Cyclin AB subfamily.

This chain is Cyclin-A2-1 (CYCA2-1), found in Oryza sativa subsp. japonica (Rice).